Consider the following 168-residue polypeptide: Alpha-amylase/trypsin inhibitor CM3 (168 aa).

A signal peptide spans 1-25; it reads MACKSSCSLLLLAAVLLSVLAAASA.

It belongs to the protease inhibitor I6 (cereal trypsin/alpha-amylase inhibitor) family. Subunit of the tetrameric inhibitor. Five disulfide bonds, which are essential for the inhibitor activity, are probably present. Developing endosperm.

It is found in the secreted. In terms of biological role, alpha-amylase/trypsin inhibitor. It could be involved in insect defense mechanisms. In Triticum aestivum (Wheat), this protein is Alpha-amylase/trypsin inhibitor CM3.